Consider the following 431-residue polypeptide: Tol-Pal system protein TolB (431 aa).

Positions 1-26 (MSLMTKLGFRALVASCLITAGSAANA) are cleaved as a signal peptide. Residues 406–431 (DGSAPPQILSVQGGSVREPSWGPFMQ) form a disordered region.

It belongs to the TolB family. As to quaternary structure, the Tol-Pal system is composed of five core proteins: the inner membrane proteins TolA, TolQ and TolR, the periplasmic protein TolB and the outer membrane protein Pal. They form a network linking the inner and outer membranes and the peptidoglycan layer.

Its subcellular location is the periplasm. Functionally, part of the Tol-Pal system, which plays a role in outer membrane invagination during cell division and is important for maintaining outer membrane integrity. The chain is Tol-Pal system protein TolB from Burkholderia orbicola (strain MC0-3).